We begin with the raw amino-acid sequence, 1509 residues long: DNA-directed RNA polymerase subunit beta' (1509 aa).

4 residues coordinate Zn(2+): Cys-75, Cys-77, Cys-90, and Cys-93. The Mg(2+) site is built by Asp-474, Asp-476, and Asp-478. Residues Cys-804, Cys-878, Cys-885, and Cys-888 each contribute to the Zn(2+) site.

This sequence belongs to the RNA polymerase beta' chain family. In terms of assembly, the RNAP catalytic core consists of 2 alpha, 1 beta, 1 beta' and 1 omega subunit. When a sigma factor is associated with the core the holoenzyme is formed, which can initiate transcription. Mg(2+) is required as a cofactor. Requires Zn(2+) as cofactor.

The catalysed reaction is RNA(n) + a ribonucleoside 5'-triphosphate = RNA(n+1) + diphosphate. DNA-dependent RNA polymerase catalyzes the transcription of DNA into RNA using the four ribonucleoside triphosphates as substrates. This Sulfurovum sp. (strain NBC37-1) protein is DNA-directed RNA polymerase subunit beta'.